A 264-amino-acid chain; its full sequence is Thymidylate synthase (264 aa).

Arg-21 is a binding site for dUMP. His-51 lines the (6R)-5,10-methylene-5,6,7,8-tetrahydrofolate pocket. 126-127 serves as a coordination point for dUMP; the sequence is RR. Catalysis depends on Cys-146, which acts as the Nucleophile. Residues 166 to 169, Asn-177, and 207 to 209 contribute to the dUMP site; these read RSCD and HLY. Residue Asp-169 coordinates (6R)-5,10-methylene-5,6,7,8-tetrahydrofolate. Residue Ser-263 participates in (6R)-5,10-methylene-5,6,7,8-tetrahydrofolate binding.

Belongs to the thymidylate synthase family. Bacterial-type ThyA subfamily. As to quaternary structure, homodimer.

Its subcellular location is the cytoplasm. It catalyses the reaction dUMP + (6R)-5,10-methylene-5,6,7,8-tetrahydrofolate = 7,8-dihydrofolate + dTMP. It functions in the pathway pyrimidine metabolism; dTTP biosynthesis. Functionally, catalyzes the reductive methylation of 2'-deoxyuridine-5'-monophosphate (dUMP) to 2'-deoxythymidine-5'-monophosphate (dTMP) while utilizing 5,10-methylenetetrahydrofolate (mTHF) as the methyl donor and reductant in the reaction, yielding dihydrofolate (DHF) as a by-product. This enzymatic reaction provides an intracellular de novo source of dTMP, an essential precursor for DNA biosynthesis. The polypeptide is Thymidylate synthase (Wigglesworthia glossinidia brevipalpis).